Here is a 139-residue protein sequence, read N- to C-terminus: NADPH-dependent 7-cyano-7-deazaguanine reductase (139 aa).

Cys34 serves as the catalytic Thioimide intermediate. The Proton donor role is filled by Asp41. Substrate-binding positions include 56–58 (VEL) and 75–76 (HE).

Belongs to the GTP cyclohydrolase I family. QueF type 1 subfamily.

Its subcellular location is the cytoplasm. It catalyses the reaction 7-aminomethyl-7-carbaguanine + 2 NADP(+) = 7-cyano-7-deazaguanine + 2 NADPH + 3 H(+). Its pathway is tRNA modification; tRNA-queuosine biosynthesis. In terms of biological role, catalyzes the NADPH-dependent reduction of 7-cyano-7-deazaguanine (preQ0) to 7-aminomethyl-7-deazaguanine (preQ1). The polypeptide is NADPH-dependent 7-cyano-7-deazaguanine reductase (Methylobacillus flagellatus (strain ATCC 51484 / DSM 6875 / VKM B-1610 / KT)).